Consider the following 332-residue polypeptide: Transaldolase (332 aa).

Catalysis depends on Lys-135, which acts as the Schiff-base intermediate with substrate.

It belongs to the transaldolase family. Type 1 subfamily. In terms of assembly, homodimer.

The protein resides in the cytoplasm. The catalysed reaction is D-sedoheptulose 7-phosphate + D-glyceraldehyde 3-phosphate = D-erythrose 4-phosphate + beta-D-fructose 6-phosphate. The protein operates within carbohydrate degradation; pentose phosphate pathway; D-glyceraldehyde 3-phosphate and beta-D-fructose 6-phosphate from D-ribose 5-phosphate and D-xylulose 5-phosphate (non-oxidative stage): step 2/3. Its function is as follows. Transaldolase is important for the balance of metabolites in the pentose-phosphate pathway. This is Transaldolase from Prochlorococcus marinus (strain NATL1A).